The following is a 547-amino-acid chain: Nitrosoguanidine resistance protein SNG1 (547 aa).

Residues 35–86 are disordered; sequence NQRFAEGSGHSSDLAKSLEDYRPPDEKPSSLSSVGEGGANEEEKGGNDGGPL. Basic and acidic residues predominate over residues 50 to 62; the sequence is KSLEDYRPPDEKP. At T91 the chain carries Phosphothreonine. The next 8 membrane-spanning stretches (helical) occupy residues 109-129, 159-179, 318-338, 363-383, 394-414, 418-438, 457-477, and 488-508; these read FVLNNFFIACVCVSLISIYWG, ISAIIPSLLASVPGTWHIYNA, ILMAPLQVGLIYCILLTVLQL, LISWATYFLLSIGFCTVSAIF, GGFVVYWMSTWLVMMAVGGAN, LSLVIAYCPPYLSIWLMTWII, YGYIMPIHNAVDIYKVIFLNL, and ILVAWVALNTSLMPFCMKFAG. The segment covering 526-536 has biased composition (low complexity); the sequence is ATQRASRPAEA. The segment at 526 to 547 is disordered; it reads ATQRASRPAEANTDKNNNPPGN.

To yeast YJR015W.

Its subcellular location is the membrane. Its function is as follows. May function as a N-methyl-N'nitro-N-nitrosoguanidine (MNNG) export permease. The chain is Nitrosoguanidine resistance protein SNG1 (SNG1) from Saccharomyces cerevisiae (strain ATCC 204508 / S288c) (Baker's yeast).